Reading from the N-terminus, the 392-residue chain is MASSLVSRPHLTQRPVRAATLASATRPRLAAGALSGRCQAQAAGDLDDAHYMRRCVELARKAAGHTSPNPMVGCVIVRDGRVVGEGFHPKAGQPHAEVFALRDAGNLAENATAYVSLEPCNHYGRTPPCTEALINAKVKEVVVGMTDPNPIVASKGIEKLQGAGISVRVGVEEALCRKLNEAYIHRMLTGKAFATLRATLSMNGIITNQIGKGADQSGGYYSQLMKEYDGVIISSDLAKMSALPLSREAGTNQPLCIIIAQGESSRLHIPSLSQEHASRAIVLADSPVTVEPAGVEVAVFRQIDLESILQLLAQRGLCSVLVDFREAGESFASLLNDFQEDKLVQKVVVEVLPFWLASDGLSNLAFGGSQSFPLKNLELRDVNGSVLLEGYV.

Residues 1–26 constitute a chloroplast transit peptide; sequence MASSLVSRPHLTQRPVRAATLASATR. A CMP/dCMP-type deaminase domain is found at 46 to 168; it reads LDDAHYMRRC…KLQGAGISVR (123 aa). Histidine 95 lines the Zn(2+) pocket. Residue glutamate 97 is the Proton donor of the active site. 2 residues coordinate Zn(2+): cysteine 120 and cysteine 129.

Zn(2+) serves as cofactor.

The protein resides in the plastid. Its subcellular location is the chloroplast. The enzyme catalyses 2,5-diamino-6-hydroxy-4-(5-phosphoribosylamino)-pyrimidine + H2O + H(+) = 5-amino-6-(5-phospho-D-ribosylamino)uracil + NH4(+). It functions in the pathway cofactor biosynthesis; riboflavin biosynthesis; 5-amino-6-(D-ribitylamino)uracil from GTP: step 2/4. Its function is as follows. Monofunctional pyrimidine deaminase involved in the riboflavin biosynthesis pathway. Also has a reductase domain that lacks catalytically essential substrate-binding residues. The protein is Riboflavin biosynthesis protein PYRD, chloroplastic (PYRD) of Zea mays (Maize).